A 220-amino-acid polypeptide reads, in one-letter code: Ribonuclease HII (220 aa).

Residues 27–220 form the RNase H type-2 domain; sequence CIIVGVDEVG…SKISYMFKNS (194 aa). Residues aspartate 33, glutamate 34, and aspartate 128 each contribute to the a divalent metal cation site.

Belongs to the RNase HII family. The cofactor is Mn(2+). It depends on Mg(2+) as a cofactor.

It localises to the cytoplasm. It catalyses the reaction Endonucleolytic cleavage to 5'-phosphomonoester.. Functionally, endonuclease that specifically degrades the RNA of RNA-DNA hybrids. The chain is Ribonuclease HII from Ehrlichia ruminantium (strain Gardel).